The primary structure comprises 147 residues: MTKQEFKAITKELFFFNKKRLMLWIAILIFVIAFAMIIVFVPFFNFNDKIKSLFDKLKHINWQDPTALFGLVFSVLGYLITALSIPLKVFELMLMLRFRLMLAKLIKDGILDPKAFIDDIRHSYLSRRKQRKLEEEIEYLKRIKSDY.

2 helical membrane passes run 21–41 (LMLWIAILIFVIAFAMIIVFV) and 67–87 (ALFGLVFSVLGYLITALSIPL).

The protein resides in the cell membrane. This is an uncharacterized protein from Ureaplasma parvum serovar 3 (strain ATCC 700970).